Here is a 543-residue protein sequence, read N- to C-terminus: NADH-ubiquinone oxidoreductase chain 4 (543 aa).

14 helical membrane passes run 5 to 25, 84 to 104, 129 to 149, 161 to 181, 182 to 202, 213 to 233, 254 to 274, 287 to 307, 321 to 341, 350 to 370, 377 to 397, 416 to 436, 456 to 476, and 501 to 521; these read FLMF…IIWS, VVAF…YILF, VDGI…IALM, SYLI…LVLD, ILLF…LIGL, FYIF…ILTM, IQIF…PTIF, PLGG…YGIF, YTYI…FSTL, IAYS…SNTI, ILLG…VGGV, MAPL…GVPL, LLGL…IFLF, and FYAL…PSII.

The protein belongs to the complex I subunit 4 family.

It localises to the mitochondrion membrane. It catalyses the reaction a ubiquinone + NADH + 5 H(+)(in) = a ubiquinol + NAD(+) + 4 H(+)(out). Its function is as follows. Core subunit of the mitochondrial membrane respiratory chain NADH dehydrogenase (Complex I) that is believed to belong to the minimal assembly required for catalysis. Complex I functions in the transfer of electrons from NADH to the respiratory chain. The immediate electron acceptor for the enzyme is believed to be ubiquinone. This chain is NADH-ubiquinone oxidoreductase chain 4 (ndh-4), found in Neurospora crassa (strain ATCC 24698 / 74-OR23-1A / CBS 708.71 / DSM 1257 / FGSC 987).